Reading from the N-terminus, the 403-residue chain is Endophilin-B2 (403 aa).

Residues 1-27 are membrane-binding amphipathic helix; the sequence is MDFNVKKLASDAGVFFSRAMQFTEEKL. The region spanning 24 to 287 is the BAR domain; it reads EEKLGQAEKT…LGRFSGTFVG (264 aa). The stretch at 210–233 forms a coiled coil; that stretch reads WSDEVEKAEHELRLTQTEFDRQAE. Positions 343–403 constitute an SH3 domain; it reads SGTRKARVLY…VPVTYLELLS (61 aa).

Belongs to the endophilin family. As to quaternary structure, homodimer, and heterodimer with SH3GLB1.

Its subcellular location is the cytoplasm. The chain is Endophilin-B2 from Gallus gallus (Chicken).